Consider the following 643-residue polypeptide: Long-chain fatty acid transport protein 4 (643 aa).

The next 2 membrane-spanning stretches (helical) occupy residues 20-42 (LPWT…WRFI) and 139-156 (FVGL…AALI). 243–254 (YIYTSGTTGLPK) serves as a coordination point for AMP.

The protein belongs to the ATP-dependent AMP-binding enzyme family. As to expression, expressed at highest levels in brain, testis, colon and kidney. Expressed at medium levels in heart and liver, small intestine and stomach. Expressed at low levels in peripheral leukocytes, bone marrow, skeletal muscle and aorta. Expressed in adipose tissue. Expressed in brain gray matter.

Its subcellular location is the endoplasmic reticulum membrane. The catalysed reaction is a fatty acid(in) = a fatty acid(out). It catalyses the reaction (9Z,12Z)-octadecadienoate(out) = (9Z,12Z)-octadecadienoate(in). The enzyme catalyses (9Z)-octadecenoate(out) = (9Z)-octadecenoate(in). It carries out the reaction hexadecanoate(out) = hexadecanoate(in). The catalysed reaction is a long-chain fatty acid + ATP + CoA = a long-chain fatty acyl-CoA + AMP + diphosphate. It catalyses the reaction hexadecanoate + ATP + CoA = hexadecanoyl-CoA + AMP + diphosphate. The enzyme catalyses (E)-hexadec-2-enoate + ATP + CoA = (2E)-hexadecenoyl-CoA + AMP + diphosphate. It carries out the reaction (9Z)-octadecenoate + ATP + CoA = (9Z)-octadecenoyl-CoA + AMP + diphosphate. The catalysed reaction is (5Z,8Z,11Z,14Z)-eicosatetraenoate + ATP + CoA = (5Z,8Z,11Z,14Z)-eicosatetraenoyl-CoA + AMP + diphosphate. It catalyses the reaction a very long-chain fatty acid + ATP + CoA = a very long-chain fatty acyl-CoA + AMP + diphosphate. The enzyme catalyses tetracosanoate + ATP + CoA = tetracosanoyl-CoA + AMP + diphosphate. Functionally, mediates the levels of long-chain fatty acids (LCFA) in the cell by facilitating their transport across cell membranes. Appears to be the principal fatty acid transporter in small intestinal enterocytes. Also functions as an acyl-CoA ligase catalyzing the ATP-dependent formation of fatty acyl-CoA using LCFA and very-long-chain fatty acids (VLCFA) as substrates, which prevents fatty acid efflux from cells and might drive more fatty acid uptake. Plays a role in the formation of the epidermal barrier. Required for fat absorption in early embryogenesis. Probably involved in fatty acid transport across the blood barrier. Indirectly inhibits RPE65 via substrate competition and via production of VLCFA derivatives like lignoceroyl-CoA. Prevents light-induced degeneration of rods and cones. In Homo sapiens (Human), this protein is Long-chain fatty acid transport protein 4.